Reading from the N-terminus, the 59-residue chain is Embryonic testis differentiation protein (59 aa).

The interval 1–28 (MDEKNPEAVPRPPEQNTELVPPKKSKSK) is disordered.

In terms of tissue distribution, specifically expressed in testis.

In Mus musculus (Mouse), this protein is Embryonic testis differentiation protein.